Consider the following 334-residue polypeptide: Ornithine carbamoyltransferase, catabolic (334 aa).

Carbamoyl phosphate is bound by residues 57–60 (STRT), Q84, R108, and 135–138 (HPTQ). L-ornithine-binding positions include N168, D232, and 236-237 (SM). Residues 274-275 (CL) and R321 each bind carbamoyl phosphate.

The protein belongs to the aspartate/ornithine carbamoyltransferase superfamily. OTCase family.

Its subcellular location is the cytoplasm. The catalysed reaction is carbamoyl phosphate + L-ornithine = L-citrulline + phosphate + H(+). It participates in amino-acid degradation; L-arginine degradation via ADI pathway; carbamoyl phosphate from L-arginine: step 2/2. Functionally, reversibly catalyzes the transfer of the carbamoyl group from carbamoyl phosphate (CP) to the N(epsilon) atom of ornithine (ORN) to produce L-citrulline. The sequence is that of Ornithine carbamoyltransferase, catabolic (arcB) from Haemophilus influenzae (strain ATCC 51907 / DSM 11121 / KW20 / Rd).